The primary structure comprises 755 residues: Probable ubiquitin carboxyl-terminal hydrolase creB (755 aa).

The segment at 1–32 (MGSFLRSLRRDVGPPTPSVGATPAKKEPPVPP) is disordered. The USP domain occupies 55 to 468 (FGMENYGNTC…CAYVLFYQET (414 aa)). Residue cysteine 64 is the Nucleophile of the active site. 2 disordered regions span residues 119–146 (EKQKAANAQRPGAPPNQPQKPEDKDSPE) and 237–270 (EASKQPEPERSLPPAESADSTELSGSSGSKTPNT). The span at 237–246 (EASKQPEPER) shows a compositional bias: basic and acidic residues. Residues 254-270 (ADSTELSGSSGSKTPNT) show a composition bias toward polar residues. Histidine 419 serves as the catalytic Proton acceptor. Positions 495 to 755 (TLKQNGYPLS…LKKKSFSILS (261 aa)) are disordered. The segment covering 547-560 (ESSPADPSTTASAT) has biased composition (low complexity). Over residues 577-648 (KKSDSHFKKE…RRHSPDDTKK (72 aa)) the composition is skewed to basic and acidic residues. Residues 581 to 630 (SHFKKERAKEEKERKANEKEKEKQRRRDQEARIREQRREDAEIRAALEAS) are a coiled coil. Over residues 654–666 (SRLKRGSKSFSHR) the composition is skewed to basic residues. The span at 693–709 (NGASESQQQLPNGQSPG) shows a compositional bias: polar residues. The segment covering 718 to 733 (TGLDEERDTLKDPKHD) has biased composition (basic and acidic residues). Positions 734–755 (RSGHHGKWRSFSLKKKSFSILS) are enriched in basic residues.

It belongs to the peptidase C19 family. In terms of assembly, interacts with creA, creC and qutD.

It catalyses the reaction Thiol-dependent hydrolysis of ester, thioester, amide, peptide and isopeptide bonds formed by the C-terminal Gly of ubiquitin (a 76-residue protein attached to proteins as an intracellular targeting signal).. Its function is as follows. Ubiquitin thioesterase component of the regulatory network controlling carbon source utilization through ubiquitination and deubiquitination involving creA, creB, creC, creD and acrB. Deubiquitinates the creA catabolic repressor and the quinate permease qutD. Also plays a role in response to carbon starvation and the control of extracellular proteases activity. This chain is Probable ubiquitin carboxyl-terminal hydrolase creB (creB), found in Aspergillus flavus (strain ATCC 200026 / FGSC A1120 / IAM 13836 / NRRL 3357 / JCM 12722 / SRRC 167).